A 272-amino-acid chain; its full sequence is MKVIKTLSIINFFIFVTFNIKNESKYSNTFINNAYNMSIRRSMAESKPSTGAGGSAGGSAGGSAGGSAGGSAGGSAGSGDGNGADAEGSSSTPATTTTTKTTTTTTTTNDAEASTSTSSENPNHKNAETNPKGKGEVQEPNQANKETQNNSNVQQDSQTKSNVPPTQDADTKSPTAQPEQAENSAPTAEQTESPELQSAPENKGTGQHGHMHGSRNNHPQNTSDSQKECTDGNKENCGAATSLLNNSSNIASINKFVVLISATLVLSFAIFI.

Positions 1 to 20 (MKVIKTLSIINFFIFVTFNI) are cleaved as a signal peptide. N-linked (GlcNAc...) asparagine glycans are attached at residues Asn22 and Asn36. Positions 44 to 198 (AESKPSTGAG…EQTESPELQS (155 aa)) are polymorphic region. A disordered region spans residues 45–233 (ESKPSTGAGG…DSQKECTDGN (189 aa)). Positions 51–82 (GAGGSAGGSAGGSAGGSAGGSAGGSAGSGDGN) are enriched in gly residues. A run of 6 repeats spans residues 53-56 (GGSA), 57-60 (GGSA), 61-64 (GGSA), 65-68 (GGSA), 69-72 (GGSA), and 73-76 (GGSA). The interval 53–76 (GGSAGGSAGGSAGGSAGGSAGGSA) is 6 X 4 AA tandem repeats of G-G-S-A. Residues 83–119 (GADAEGSSSTPATTTTTKTTTTTTTTNDAEASTSTSS) are compositionally biased toward low complexity. Over residues 122–137 (PNHKNAETNPKGKGEV) the composition is skewed to basic and acidic residues. 2 stretches are compositionally biased toward polar residues: residues 139–165 (EPNQANKETQNNSNVQQDSQTKSNVPP) and 172–200 (KSPTAQPEQAENSAPTAEQTESPELQSAP). N-linked (GlcNAc...) asparagine glycosylation occurs at Asn149. Asn221 is a glycosylation site (N-linked (GlcNAc...) asparagine). Cys229 and Cys237 are oxidised to a cystine. Asn245 and Asn246 each carry an N-linked (GlcNAc...) asparagine glycan. The GPI-anchor amidated asparagine moiety is linked to residue Asn246. Residues 247–272 (SSNIASINKFVVLISATLVLSFAIFI) constitute a propeptide, removed in mature form.

Its subcellular location is the cell membrane. May play a role in the merozoite attachment to the erythrocyte. The sequence is that of Merozoite surface protein 2 from Plasmodium falciparum (isolate 3D7).